The chain runs to 504 residues: Probable phenylalanine--tRNA ligase beta subunit (504 aa).

The region spanning 270-346 (IKDKSYLLSI…ICYGFNNINM (77 aa)) is the B5 domain. The Mg(2+) site is built by aspartate 324, aspartate 330, glutamate 333, and aspartate 334.

The protein belongs to the phenylalanyl-tRNA synthetase beta subunit family. Type 2 subfamily. In terms of assembly, tetramer of two alpha and two beta subunits. The cofactor is Mg(2+).

Its subcellular location is the cytoplasm. It carries out the reaction tRNA(Phe) + L-phenylalanine + ATP = L-phenylalanyl-tRNA(Phe) + AMP + diphosphate + H(+). The protein is Probable phenylalanine--tRNA ligase beta subunit of Vairimorpha ceranae (strain BRL01) (Microsporidian parasite).